Reading from the N-terminus, the 143-residue chain is Large ribosomal subunit protein uL11 (143 aa).

This sequence belongs to the universal ribosomal protein uL11 family. As to quaternary structure, part of the ribosomal stalk of the 50S ribosomal subunit. Interacts with L10 and the large rRNA to form the base of the stalk. L10 forms an elongated spine to which L12 dimers bind in a sequential fashion forming a multimeric L10(L12)X complex. One or more lysine residues are methylated.

In terms of biological role, forms part of the ribosomal stalk which helps the ribosome interact with GTP-bound translation factors. In Clavibacter sepedonicus (Clavibacter michiganensis subsp. sepedonicus), this protein is Large ribosomal subunit protein uL11.